A 147-amino-acid polypeptide reads, in one-letter code: E3 ubiquitin-protein ligase RHA2B (147 aa).

The segment at 74-116 (CIVCLSKLKTGEEVRKLDCRHVFHKQCLEGWLQHLNFNCPLCR) adopts an RING-type; atypical zinc-finger fold.

Interacts with NAC19. As to expression, expressed in vascular tissue, root tips, embryos and pistils.

Its subcellular location is the cytoplasm. It is found in the nucleus. The catalysed reaction is S-ubiquitinyl-[E2 ubiquitin-conjugating enzyme]-L-cysteine + [acceptor protein]-L-lysine = [E2 ubiquitin-conjugating enzyme]-L-cysteine + N(6)-ubiquitinyl-[acceptor protein]-L-lysine.. It functions in the pathway protein modification; protein ubiquitination. In terms of biological role, E3 ubiquitin-protein ligase involved in the positive regulation of abscisic acid (ABA) signaling and responses to salt and osmotic stresses during seed germination and early seedling development. Acts additively with RHA2A in regulating ABA signaling and drought response. Possesses E3 ubiquitin ligase activity in vitro. This chain is E3 ubiquitin-protein ligase RHA2B, found in Arabidopsis thaliana (Mouse-ear cress).